Consider the following 485-residue polypeptide: MGRYSGKTCRLLFMLVLTVAFFVAELVSGYLGNSIALLSDSFNMLSDLISLCVGLSAGYIARRPTRGFSATYGYARAEVVGALSNAVFLTALCFTIFVEAVLRLARPERIDDPELVLIVGVLGLLVNVVGLLIFQDCAAWFACCLRGRSRRLQQRQQLAEGCVPGAFGGPQGAEDPRRAADPTAPGSDSAVTLRGTSVERKREKGATVFANVAGDSFNTQNEPEDMMKKEKKSEALNIRGVLLHVMGDALGSVVVVITAIIFYVLPLKSEDPCNWQCYIDPSLTVLMVIIILSSAFPLIKETAAILLQMVPKGVNMEELMSKLSAVPGISSVHEVHIWELVSGKIIATLHIKYPKDRGYQDASTKIREIFHHAGIHNVTIQFENVDLKEPLEQKDLLLLCNSPCISKGCAKQLCCPPGALPLAHVNGCAEHNGGPSLDTYGSDGLSRRDAREVAIEVSLDSCLSDHGQSLNKTQEDQCYVNRTHF.

The Cytoplasmic segment spans residues 1 to 10; that stretch reads MGRYSGKTCR. A helical transmembrane segment spans residues 11-31; the sequence is LLFMLVLTVAFFVAELVSGYL. The Extracellular segment spans residues 32–40; sequence GNSIALLSD. The helical transmembrane segment at 41–61 threads the bilayer; that stretch reads SFNMLSDLISLCVGLSAGYIA. Residues 62–81 are Cytoplasmic-facing; it reads RRPTRGFSATYGYARAEVVG. The helical transmembrane segment at 82 to 102 threads the bilayer; sequence ALSNAVFLTALCFTIFVEAVL. The Extracellular segment spans residues 103 to 113; it reads RLARPERIDDP. A helical transmembrane segment spans residues 114–134; sequence ELVLIVGVLGLLVNVVGLLIF. Residues 135-244 are Cytoplasmic-facing; it reads QDCAAWFACC…ALNIRGVLLH (110 aa). The tract at residues 167–196 is disordered; sequence FGGPQGAEDPRRAADPTAPGSDSAVTLRGT. The helical transmembrane segment at 245–265 threads the bilayer; the sequence is VMGDALGSVVVVITAIIFYVL. At 266 to 278 the chain is on the extracellular side; it reads PLKSEDPCNWQCY. Residues 279-299 form a helical membrane-spanning segment; sequence IDPSLTVLMVIIILSSAFPLI. Over 300–485 the chain is Cytoplasmic; sequence KETAAILLQM…DQCYVNRTHF (186 aa). The tract at residues 308 to 485 is required for plasma membrane localization; it reads QMVPKGVNME…DQCYVNRTHF (178 aa).

This sequence belongs to the cation diffusion facilitator (CDF) transporter (TC 2.A.4) family. SLC30A subfamily. Forms homodimers. Forms heterodimers and high-molecular weight oligomers with SLC30A3, SLC30A2 and SLC30A4; heterodimerization is mediated by covalent-bound tyrosine residues, occurs probably in a tissue-specific manner and could mediate the intracellular zinc transport activity into early endosomes and recycling endosomes. Specifically expressed in fetal liver and fetal brain. Expressed in adult tissues with relative levels small intestine &gt; liver &gt; testes &gt; brain &gt; ovary &gt; colon &gt; cervix &gt; prostate &gt; placenta. Expressed in liver and neurons of the nervous system (at protein level).

The protein localises to the cell membrane. It localises to the golgi apparatus membrane. It is found in the recycling endosome membrane. The protein resides in the early endosome membrane. It carries out the reaction Mn(2+)(out) + Ca(2+)(in) = Mn(2+)(in) + Ca(2+)(out). It catalyses the reaction Zn(2+)(in) = Zn(2+)(out). In terms of biological role, calcium:manganese antiporter of the plasma membrane mediating the efflux of intracellular manganese coupled to an active extracellular calcium exchange. Required for intracellular manganese homeostasis, an essential cation for the function of several enzymes, including some crucially important for the metabolism of neurotransmitters and other neuronal metabolic pathways. Manganese can also be cytotoxic and induce oxidative stress, mitochondrial dysfunction and apoptosis. Could also have an intracellular zinc ion transporter activity, directly regulating intracellular zinc ion homeostasis and more indirectly various signaling pathway and biological processes. In Homo sapiens (Human), this protein is Calcium/manganese antiporter SLC30A10.